Here is a 360-residue protein sequence, read N- to C-terminus: POU domain, class 5, transcription factor 1 (360 aa).

Disordered stretches follow at residues 1–48 (MAGH…SGIG) and 86–137 (PPGG…EESQ). Positions 4–12 (HLASDFAFS) match the 9aaTAD motif. Ser111 carries the phosphoserine; by MAPK modification. Residue Lys123 forms a Glycyl lysine isopeptide (Lys-Gly) (interchain with G-Cter in SUMO) linkage. The span at 123–137 (KLDKEKLEPNPEESQ) shows a compositional bias: basic and acidic residues. One can recognise a POU-specific domain in the interval 138 to 212 (DIKALQKDLE…LLQKWVEEAD (75 aa)). Residues Arg157 and Gln164 each contribute to the DNA site. DNA-binding stretches follow at residues 180–186 (SQTTICR) and 193–196 (SFKN). The homeobox DNA-binding region spans 230–289 (RKRKRTSIENRVRGNLESMFLQCPKPTLQQISHIAQQLGLEKDVVRVWFCNRRQKGKRSS). Thr235 carries the post-translational modification Phosphothreonine. 4 positions are modified to phosphoserine: Ser236, Ser289, Ser290, and Ser355. Residues 287-322 (RSSSDYSQREDFEAAGSPFTGGPVSSPLAPGPHFGT) form a disordered region.

The protein belongs to the POU transcription factor family. Class-5 subfamily. In terms of assembly, interacts with PKM. Interacts with WWP2. Interacts with UBE2I and ZSCAN10. Interacts with PCGF1. Interacts with ESRRB; recruits ESRRB near the POU5F1-SOX2 element in the NANOG proximal promoter; the interaction is DNA independent. Interacts with MAPK8 and MAPK9; the interaction allows MAPK8 and MAPK9 to phosphorylate POU5F1 on Ser-355. Interacts (when phosphorylated on Ser-355) with FBXW8. Interacts with FBXW4. Interacts with SOX2 and SOX15; binds synergistically with either SOX2 or SOX15 to DNA. Interacts with DDX56. Post-translationally, sumoylation enhances the protein stability, DNA binding and transactivation activity. Sumoylation is required for enhanced YES1 expression. Ubiquitinated; undergoes 'Lys-63'-linked polyubiquitination by WWP2 leading to proteasomal degradation. In terms of processing, ERK1/2-mediated phosphorylation at Ser-111 promotes nuclear exclusion and proteasomal degradation. Phosphorylation at Thr-235 and Ser-236 decrease DNA-binding and alters ability to activate transcription. In terms of tissue distribution, expressed in immature oocytes.

Its subcellular location is the cytoplasm. It localises to the nucleus. Functionally, transcription factor that binds to the octamer motif (5'-ATTTGCAT-3'). Forms a trimeric complex with SOX2 or SOX15 on DNA and controls the expression of a number of genes involved in embryonic development such as YES1, FGF4, UTF1 and ZFP206. Critical for early embryogenesis and for embryonic stem cell pluripotency. The protein is POU domain, class 5, transcription factor 1 (POU5F1) of Bos taurus (Bovine).